Reading from the N-terminus, the 502-residue chain is NAD(P)H-quinone oxidoreductase chain 4, chloroplastic (502 aa).

Transmembrane regions (helical) follow at residues 4 to 24 (FPWLTIIVGLPIFAGTLIFFF), 37 to 57 (ICICILELLITAYVFCYHFQL), 87 to 107 (VGPILLTGFITTLATLAAWPV), 113 to 130 (LFHFLMLAMYSGQIGLFS), 134 to 154 (LLLFFIMWEFELIPVYLLLSM), 167 to 187 (FILYTAGGSIFLLMGVLGMGL), 208 to 228 (ALEILFYFGFLIGYAVKLPII), 242 to 262 (HYSTCMLLAGILLKMGAYGLV), 272 to 292 (AHSIFSPWLIIVGAIQIIYAA), 305 to 325 (IAYSSVSHMGFIIIGICSITD), 330 to 350 (GAILQMISHGFIGAALFFLAG), 374 to 396 (IFTMFSSFSMASLALPGMSGFAA), 416 to 436 (ILITFVTAIGMILTPIYSLSM), and 464 to 484 (LFVSICIFLPVIGIGIYPDFV).

Belongs to the complex I subunit 4 family.

The protein localises to the plastid. It is found in the chloroplast thylakoid membrane. It carries out the reaction a plastoquinone + NADH + (n+1) H(+)(in) = a plastoquinol + NAD(+) + n H(+)(out). The catalysed reaction is a plastoquinone + NADPH + (n+1) H(+)(in) = a plastoquinol + NADP(+) + n H(+)(out). This Ranunculus macranthus (Large buttercup) protein is NAD(P)H-quinone oxidoreductase chain 4, chloroplastic.